Reading from the N-terminus, the 450-residue chain is MAQFYSPNRRVTTRKAVPAKNLTVTVASLDPFGQGVARHEGKTVFVTGVLPGEQAEVQLTEEKRQFSHAKLKRLLTPSPQRVEPPCPHFTRCGGCQQQHAEITLQQSSKTAALMRMMTRETGIELSAASLIAGTPYAYRRRARLALYFQAKEQRLLMGYRQSNSHDLVDIKACPVLRPELEALLQPLRDCLSQLSAVKRLGHVELVQAENGPLLVLRHLDPLHPADEQALRDFAQRQGVSVYLAPDAESLTCLHGEEPVYHVAGLTLAFSPRDFIQVNDAVNQQMVAQALAWLDVQSQDRILDLFCGMGNFTLPLAQRAASVVGVEGVTALVEKGRENARRNALSNVTFFHQNLEDDVTQQPWAAQGFDKILLDPARAGAAGVMEQITRLAPKRVVYVSCNATTLARDSKVLLAAGYRLANVAMLDMFPHTGHLESMALFLHDTGMRKAQ.

A TRAM domain is found at K15 to R73. [4Fe-4S] cluster is bound by residues C86, C92, C95, and C173. S-adenosyl-L-methionine is bound by residues Q276, F305, N310, E326, N353, and D374. The active-site Nucleophile is the C400.

Belongs to the class I-like SAM-binding methyltransferase superfamily. RNA M5U methyltransferase family. RlmD subfamily.

The enzyme catalyses uridine(1939) in 23S rRNA + S-adenosyl-L-methionine = 5-methyluridine(1939) in 23S rRNA + S-adenosyl-L-homocysteine + H(+). Functionally, catalyzes the formation of 5-methyl-uridine at position 1939 (m5U1939) in 23S rRNA. This chain is 23S rRNA (uracil(1939)-C(5))-methyltransferase RlmD, found in Pectobacterium atrosepticum (strain SCRI 1043 / ATCC BAA-672) (Erwinia carotovora subsp. atroseptica).